Reading from the N-terminus, the 1499-residue chain is MSTANTSLSQQLDEKPWVDASDNSSVQEYQGFDATASHNIQDLARKLTHGSTNGDHHSANDLARYLSHMSDIPGVSPFNGNISHEQLDPDSENFNAKYWVKNLKKLFESDSDYYKPSKLGVAYRNLRAYGIANDSDYQPTVTNALWKFTTEAINKLKKPDDSKYFDILKSMDAIMRPGELTVVLGRPGAGCSTLLKTIAVNTYGFHIGKESQITYDGLSPHDIERHYRGDVIYSAETDVHFPHLSVGDTLEFAARLRTPQNRGEGIDRETYAKHMASVYMATYGLSHTRNTNVGNDFVRGVSGGERKRVSIAEASLSGANIQCWDNATRGLDSATALEFIRALKTSATILDTTPLIAIYQCSQDAYELFDNVVVLYEGYQIFFGKASKAKEYFENMGWKCPQRQTTADFLTSLTNPAEREPLPGYEDKVPRTAQEFETFWKNSPEYAELTKEIDEYFVECERSNTGETYRESHVAKQSNNTRPSSPYTVSFFMQVRYVIARNFLRMKGDPSIPLISILSQLVMGLILASVFFNLRKSTDTFYFRGGALFFSVLFNAFSSLLEILSLYEARPIVEKHRKYALYRPSADALASIISELPVKLLMTMSFNIVYYFMVNLRRTAGNFFFYWLMCASCTLVMSHMFRSIGAVTTTIATAMSLSTVFLLAMIIYAGFVLPIPYILGWSRWIRYINPVTYIFESLMVNEFHGREFECGQYIPSGPGFENLPVENKVCTTVGSTPGSTVVQGTEYIKLAYQFYSSHKWRNFGITVAFAVFFLGVYVALTEFNKGAMQKGEIVLFLKGSLKKHKRKTAASNKGDIEAGPVAGKLDYQDEAEAVNNEKFTEKGSTGSVDFPENREIFFWRDLTYQVKIKKEDRVILDHVDGWVKPGQITALMGASGAGKTTLLNCLSERVTTGIITDGERLVNGHALDSSFQRSIGYVQQQDVHLETTTVREALQFSAYLRQSNKISKKEKDDYVDYVIDLLEMTDYADALVGVAGEGLNVEQRKRLTIGVELVAKPKLLLFLDEPTSGLDSQTAWSICKLMRKLADHGQAILCTIHQPSALIMAEFDKLLFLQKGGRTAYFGELGENCQTMINYFEKYGADPCPKEANPAEWMLQVVGAAPGSHAKQDYFEVWRNSSEYQAVREEINRMEAELSKLPRDNDPEALLKYAAPLWKQYLLVSWRTIVQDWRSPGYIYSKLILVISSSLFIGFSFFKSKNNLQGLQSQMLAVFMFFVPFTTFIDQMLPYFVKHRAVYEVREAPSRTFSWFAFIAGQITSEIPFQIVVGTISYFCWYYPVGLYANAEPTDSVNSRGVLMWMLLTAFYVYTSTMGQLAISLNELIDNAANLATTLFTLCLMFCGVLAGPNVIPGFWIFMYRCNPFTYLIQAILSTGLANAKVTCAPRELVTLKPPMGETCSSFIGPYTEAAGGYFSTNSDGTCSVCRIDSTNQFLESINALFSQRWRNFGIFVAFIGINIILTIFFYWLARVPKGNREKKMKK.

Residues 1-511 (MSTANTSLSQ…NFLRMKGDPS (511 aa)) are Cytoplasmic-facing. Positions 148–402 (FTTEAINKLK…FENMGWKCPQ (255 aa)) constitute an ABC transporter 1 domain. 6 helical membrane-spanning segments follow: residues 512 to 532 (IPLI…SVFF), 546 to 566 (GALF…ILSL), 596 to 616 (LPVK…MVNL), 621 to 641 (GNFF…SHMF), 660 to 680 (VFLL…YILG), and 763 to 783 (FGIT…LTEF). The Cytoplasmic portion of the chain corresponds to 784 to 1193 (NKGAMQKGEI…TIVQDWRSPG (410 aa)). The region spanning 857 to 1101 (FFWRDLTYQV…MINYFEKYGA (245 aa)) is the ABC transporter 2 domain. ATP is bound at residue 893-900 (GASGAGKT). A run of 6 helical transmembrane segments spans residues 1194 to 1214 (YIYS…FSFF), 1229 to 1249 (AVFM…PYFV), 1279 to 1299 (IPFQ…PVGL), 1315 to 1335 (LMWM…QLAI), 1354 to 1374 (LCLM…FWIF), and 1465 to 1485 (FGIF…FYWL).

This sequence belongs to the ABC transporter superfamily. ABCG family. PDR (TC 3.A.1.205) subfamily.

It localises to the membrane. In terms of biological role, multidrug efflux transporter. Confers resistance to azole antifungal agents, to other antifungals (terbinafine, amorolfine) and to a variety of metabolic inhibitors. The polypeptide is Multidrug resistance protein CDR2 (CDR2) (Candida albicans (strain SC5314 / ATCC MYA-2876) (Yeast)).